The sequence spans 540 residues: Chaperonin GroEL (540 aa).

Residues 29–32, 86–90, Gly-413, 477–479, and Asp-493 contribute to the ATP site; these read TLGP, DGTTT, and DAL.

The protein belongs to the chaperonin (HSP60) family. Forms a cylinder of 14 subunits composed of two heptameric rings stacked back-to-back. Interacts with the co-chaperonin GroES.

The protein localises to the cytoplasm. It carries out the reaction ATP + H2O + a folded polypeptide = ADP + phosphate + an unfolded polypeptide.. Functionally, together with its co-chaperonin GroES, plays an essential role in assisting protein folding. The GroEL-GroES system forms a nano-cage that allows encapsulation of the non-native substrate proteins and provides a physical environment optimized to promote and accelerate protein folding. This chain is Chaperonin GroEL, found in Clostridium botulinum (strain Eklund 17B / Type B).